The sequence spans 616 residues: Proline--tRNA ligase (616 aa).

The protein belongs to the class-II aminoacyl-tRNA synthetase family. ProS type 1 subfamily. As to quaternary structure, homodimer.

The protein resides in the cytoplasm. The enzyme catalyses tRNA(Pro) + L-proline + ATP = L-prolyl-tRNA(Pro) + AMP + diphosphate. In terms of biological role, catalyzes the attachment of proline to tRNA(Pro) in a two-step reaction: proline is first activated by ATP to form Pro-AMP and then transferred to the acceptor end of tRNA(Pro). As ProRS can inadvertently accommodate and process non-cognate amino acids such as alanine and cysteine, to avoid such errors it has two additional distinct editing activities against alanine. One activity is designated as 'pretransfer' editing and involves the tRNA(Pro)-independent hydrolysis of activated Ala-AMP. The other activity is designated 'posttransfer' editing and involves deacylation of mischarged Ala-tRNA(Pro). The misacylated Cys-tRNA(Pro) is not edited by ProRS. The protein is Proline--tRNA ligase of Streptococcus mutans serotype c (strain ATCC 700610 / UA159).